A 671-amino-acid polypeptide reads, in one-letter code: UvrABC system protein C (671 aa).

The 80-residue stretch at 16–95 folds into the GIY-YIG domain; sequence VEPGVYRFRD…IKEFDPRFNV (80 aa). Residues 208 to 243 form the UVR domain; that stretch reads DRLARDMEREMNQAAQELNFERAARLRDNISALQRA. The interval 645–671 is disordered; sequence SSAPSSGATEAVLPAMVENGVDDTPST.

Belongs to the UvrC family. In terms of assembly, interacts with UvrB in an incision complex.

Its subcellular location is the cytoplasm. Its function is as follows. The UvrABC repair system catalyzes the recognition and processing of DNA lesions. UvrC both incises the 5' and 3' sides of the lesion. The N-terminal half is responsible for the 3' incision and the C-terminal half is responsible for the 5' incision. The polypeptide is UvrABC system protein C (Mycobacteroides abscessus (strain ATCC 19977 / DSM 44196 / CCUG 20993 / CIP 104536 / JCM 13569 / NCTC 13031 / TMC 1543 / L948) (Mycobacterium abscessus)).